Consider the following 278-residue polypeptide: NADPH-dependent 7-cyano-7-deazaguanine reductase (278 aa).

87 to 89 (IES) lines the substrate pocket. Residue 89–90 (SK) participates in NADPH binding. Cys185 acts as the Thioimide intermediate in catalysis. Catalysis depends on Asp192, which acts as the Proton donor. A substrate-binding site is contributed by 224–225 (HE). Position 253–254 (253–254 (RG)) interacts with NADPH. The tract at residues 255-278 (GLDINPYRSTNPTFSVQNHRSFRQ) is disordered. Residues 261–278 (YRSTNPTFSVQNHRSFRQ) show a composition bias toward polar residues.

The protein belongs to the GTP cyclohydrolase I family. QueF type 2 subfamily. Homodimer.

Its subcellular location is the cytoplasm. The enzyme catalyses 7-aminomethyl-7-carbaguanine + 2 NADP(+) = 7-cyano-7-deazaguanine + 2 NADPH + 3 H(+). The protein operates within tRNA modification; tRNA-queuosine biosynthesis. Functionally, catalyzes the NADPH-dependent reduction of 7-cyano-7-deazaguanine (preQ0) to 7-aminomethyl-7-deazaguanine (preQ1). In Coxiella burnetii (strain CbuK_Q154) (Coxiella burnetii (strain Q154)), this protein is NADPH-dependent 7-cyano-7-deazaguanine reductase.